We begin with the raw amino-acid sequence, 85 residues long: MAKGQSLQDPFLNALRRERIPVSIYLVNGIKLQGQIESFDQFVILLKNTVNQMVYKHAISTVVPARPVNHHHASDRPATLEKTEE.

The region spanning 9 to 68 is the Sm domain; sequence DPFLNALRRERIPVSIYLVNGIKLQGQIESFDQFVILLKNTVNQMVYKHAISTVVPARPV. Residues 66-85 are disordered; that stretch reads RPVNHHHASDRPATLEKTEE. The span at 72-85 shows a compositional bias: basic and acidic residues; the sequence is HASDRPATLEKTEE.

The protein belongs to the Hfq family. In terms of assembly, homohexamer.

Its function is as follows. RNA chaperone that binds small regulatory RNA (sRNAs) and mRNAs to facilitate mRNA translational regulation in response to envelope stress, environmental stress and changes in metabolite concentrations. Also binds with high specificity to tRNAs. This Photobacterium profundum (strain SS9) protein is RNA-binding protein Hfq.